The sequence spans 66 residues: UPF0337 protein BT9727_0908 (66 aa).

Positions 1 to 22 (MSENGLKEQITGKVEKTKGQVK) are disordered. Basic and acidic residues predominate over residues 13–22 (KVEKTKGQVK).

This sequence belongs to the UPF0337 (CsbD) family.

This chain is UPF0337 protein BT9727_0908, found in Bacillus thuringiensis subsp. konkukian (strain 97-27).